The chain runs to 295 residues: Protease HtpX (295 aa).

Helical transmembrane passes span 4 to 24 and 41 to 61; these read ILLF…TLSL and SQLL…SLFI. Residue H147 participates in Zn(2+) binding. The active site involves E148. Residue H151 coordinates Zn(2+). 2 helical membrane passes run 158–178 and 199–219; these read VTLA…ARII and IATI…VMWF. E224 is a binding site for Zn(2+).

The protein belongs to the peptidase M48B family. It depends on Zn(2+) as a cofactor.

Its subcellular location is the cell inner membrane. The polypeptide is Protease HtpX (Pseudomonas fluorescens (strain Pf0-1)).